Consider the following 143-residue polypeptide: ATP synthase subunit b' (143 aa).

The helical transmembrane segment at 6-26 (ATLPFMALQFLLLAAVLNAIF) threads the bilayer.

This sequence belongs to the ATPase B chain family. In terms of assembly, F-type ATPases have 2 components, F(1) - the catalytic core - and F(0) - the membrane proton channel. F(1) has five subunits: alpha(3), beta(3), gamma(1), delta(1), epsilon(1). F(0) has four main subunits: a(1), b(1), b'(1) and c(10-14). The alpha and beta chains form an alternating ring which encloses part of the gamma chain. F(1) is attached to F(0) by a central stalk formed by the gamma and epsilon chains, while a peripheral stalk is formed by the delta, b and b' chains.

It localises to the cellular thylakoid membrane. Its function is as follows. F(1)F(0) ATP synthase produces ATP from ADP in the presence of a proton or sodium gradient. F-type ATPases consist of two structural domains, F(1) containing the extramembraneous catalytic core and F(0) containing the membrane proton channel, linked together by a central stalk and a peripheral stalk. During catalysis, ATP synthesis in the catalytic domain of F(1) is coupled via a rotary mechanism of the central stalk subunits to proton translocation. In terms of biological role, component of the F(0) channel, it forms part of the peripheral stalk, linking F(1) to F(0). The b'-subunit is a diverged and duplicated form of b found in plants and photosynthetic bacteria. The polypeptide is ATP synthase subunit b' (Nostoc punctiforme (strain ATCC 29133 / PCC 73102)).